We begin with the raw amino-acid sequence, 697 residues long: Mediator of RNA polymerase II transcription subunit 16 (697 aa).

4 WD repeats span residues 68–107 (GHQEVITCLEWDQSGSRLLSADADGRIKCWGMTDHLANSW), 199–241 (RCRV…VSEK), 264–308 (DKFP…LPLN), and 622–663 (NQGS…CLPV).

Belongs to the Mediator complex subunit 16 family. In terms of assembly, component of the Mediator complex.

The protein resides in the nucleus. Its function is as follows. Component of the Mediator complex, a coactivator involved in the regulated transcription of nearly all RNA polymerase II-dependent genes. Mediator functions as a bridge to convey information from gene-specific regulatory proteins to the basal RNA polymerase II transcription machinery. Mediator is recruited to promoters by direct interactions with regulatory proteins and serves as a scaffold for the assembly of a functional preinitiation complex with RNA polymerase II and the general transcription factors. The polypeptide is Mediator of RNA polymerase II transcription subunit 16 (med16) (Xenopus laevis (African clawed frog)).